The sequence spans 715 residues: Photosystem I P700 chlorophyll a apoprotein A1 (715 aa).

The next 8 membrane-spanning stretches (helical) occupy residues 60–83 (VFSAHFGQLAIIFIWLSGMYFHGA), 146–169 (LYSTAIGGLIFAALMLFAGWFHYH), 185–209 (LNHHLAGLLGLGSLSWAGHQVHVSL), 281–299 (TVHHHLAIAVLFLIAGHMY), 336–359 (WHAQLALNLAMLGSLTIIVAHHMY), 375–401 (LSLFTHHMWIGGFLVVGAAAHAAIFMV), 423–445 (AIISHLNWACIFLGFHSFGLYIH), and 521–539 (FLVHHIHAFTIHVTVLILL). [4Fe-4S] cluster contacts are provided by Cys-563 and Cys-572. The next 2 helical transmembrane spans lie at 579-600 (HVFLGLFWMYNAISVVIFHFSW) and 654-676 (LSAYGLLFLGAHFVWAFSLMFLF). His-665 is a binding site for chlorophyll a'. Chlorophyll a contacts are provided by Met-673 and Tyr-681. Trp-682 provides a ligand contact to phylloquinone. The chain crosses the membrane as a helical span at residues 714 to 715 (AE).

It belongs to the PsaA/PsaB family. In terms of assembly, the PsaA/B heterodimer binds the P700 chlorophyll special pair and subsequent electron acceptors. PSI consists of a core antenna complex that captures photons, and an electron transfer chain that converts photonic excitation into a charge separation. The eukaryotic PSI reaction center is composed of at least 11 subunits. P700 is a chlorophyll a/chlorophyll a' dimer, A0 is one or more chlorophyll a, A1 is one or both phylloquinones and FX is a shared 4Fe-4S iron-sulfur center. is required as a cofactor.

It is found in the plastid. The protein localises to the chloroplast thylakoid membrane. It catalyses the reaction reduced [plastocyanin] + hnu + oxidized [2Fe-2S]-[ferredoxin] = oxidized [plastocyanin] + reduced [2Fe-2S]-[ferredoxin]. In terms of biological role, psaA and PsaB bind P700, the primary electron donor of photosystem I (PSI), as well as the electron acceptors A0, A1 and FX. PSI is a plastocyanin-ferredoxin oxidoreductase, converting photonic excitation into a charge separation, which transfers an electron from the donor P700 chlorophyll pair to the spectroscopically characterized acceptors A0, A1, FX, FA and FB in turn. Oxidized P700 is reduced on the lumenal side of the thylakoid membrane by plastocyanin. This Phlegmariurus squarrosus (Rock tassel fern) protein is Photosystem I P700 chlorophyll a apoprotein A1.